A 229-amino-acid polypeptide reads, in one-letter code: PKHD-type hydroxylase BRADO6316 (229 aa).

Positions 78–180 constitute a Fe2OG dioxygenase domain; sequence QIFPPLFNRY…RVASFFWLQS (103 aa). Fe cation contacts are provided by histidine 98, aspartate 100, and histidine 161. A 2-oxoglutarate-binding site is contributed by arginine 171.

Fe(2+) is required as a cofactor. Requires L-ascorbate as cofactor.

This is PKHD-type hydroxylase BRADO6316 from Bradyrhizobium sp. (strain ORS 278).